Here is a 1136-residue protein sequence, read N- to C-terminus: Tyrosine-protein kinase receptor Tie-1 (1136 aa).

An N-terminal signal peptide occupies residues 1–23 (MVWLEPPLLLPIFFLASHVGAAV). Topologically, residues 24–757 (DLTLLADLRL…IHAAEEGLDQ (734 aa)) are extracellular. The Ig-like C2-type 1 domain maps to 43–106 (CVSGEAGAGR…PSDLVGVFSC (64 aa)). Asparagine 84 and asparagine 159 each carry an N-linked (GlcNAc...) asparagine glycan. 3 consecutive EGF-like domains span residues 212 to 254 (GCEA…TRCE), 256 to 301 (ACRE…SQCQ), and 303 to 343 (ACAP…MHCE). 3 cysteine pairs are disulfide-bonded: cysteine 226–cysteine 235, cysteine 229–cysteine 242, and cysteine 244–cysteine 253. 3 cysteine pairs are disulfide-bonded: cysteine 317–cysteine 325, cysteine 319–cysteine 331, and cysteine 333–cysteine 342. The 55-residue stretch at 370–424 (CAAAGNPFPVRGSMELRKPDGTVLLSTKAIVEPDRTTAEFEVPRLALGDSGLWEC) folds into the Ig-like C2-type 2 domain. 3 Fibronectin type-III domains span residues 444-543 (PPVP…CPEP), 546-640 (KPWL…LPPS), and 644-737 (APRH…TLGN). Asparagine 501, asparagine 594, and asparagine 707 each carry an N-linked (GlcNAc...) asparagine glycan. The helical transmembrane segment at 758 to 782 (QLVLAVVGSVSATCLTILAALLTLA) threads the bilayer. The Cytoplasmic portion of the chain corresponds to 783–1136 (CIRKSCLHRR…AGIDATAEEA (354 aa)). One can recognise a Protein kinase domain in the interval 837 to 1116 (ITFEDLIGEG…RMLEARKAYV (280 aa)). ATP-binding positions include 843–851 (IGEGNFGQV) and lysine 868. Aspartate 977 acts as the Proton acceptor in catalysis. Phosphotyrosine; by autocatalysis is present on tyrosine 1005.

Belongs to the protein kinase superfamily. Tyr protein kinase family. Tie subfamily. Heterodimer with TEK/TIE2. Interacts with SVEP1 (via C-terminus). In terms of processing, phosphorylated on tyrosine residues in response to ANGPT1, most likely by TEK/TIE2. As to expression, specifically expressed in developing vascular endothelial cells.

It is found in the cell membrane. The enzyme catalyses L-tyrosyl-[protein] + ATP = O-phospho-L-tyrosyl-[protein] + ADP + H(+). Transmembrane tyrosine-protein kinase that may modulate TEK/TIE2 activity and contribute to the regulation of angiogenesis. This is Tyrosine-protein kinase receptor Tie-1 (TIE1) from Bos taurus (Bovine).